Consider the following 340-residue polypeptide: Proline-rich transmembrane protein 2 (340 aa).

The disordered stretch occupies residues 1 to 261 (MAASSSEISE…AGPGVEGGEG (261 aa)). At 1 to 268 (MAASSSEISE…GEGTQKPRDY (268 aa)) the chain is on the cytoplasmic side. Ser-28 is modified (phosphoserine). Phosphothreonine is present on Thr-74. Pro residues-rich tracts occupy residues 131-155 (PPEP…PKPA) and 197-207 (APEPHSPPSKK). Position 238 is a phosphoserine (Ser-238). Arg-240 carries the post-translational modification Omega-N-methylarginine. Phosphoserine is present on residues Ser-248 and Ser-249. The helical intramembrane region spans 269–289 (IILAILSCFCPMWPVNIVAFA). Residues 290–317 (YAVMSRNSLQQGDVDGAQRLGRVAKLLS) are Cytoplasmic-facing. A helical membrane pass occupies residues 318–338 (IVALVGGVLIIIASCVINLGV). The Extracellular segment spans residues 339-340 (YK).

The protein belongs to the CD225/Dispanin family. In terms of assembly, component of the outer core of AMPAR complex. AMPAR complex consists of an inner core made of 4 pore-forming GluA/GRIA proteins (GRIA1, GRIA2, GRIA3 and GRIA4) and 4 major auxiliary subunits arranged in a twofold symmetry. One of the two pairs of distinct binding sites is occupied either by CNIH2, CNIH3 or CACNG2, CACNG3. The other harbors CACNG2, CACNG3, CACNG4, CACNG8 or GSG1L. This inner core of AMPAR complex is complemented by outer core constituents binding directly to the GluA/GRIA proteins at sites distinct from the interaction sites of the inner core constituents. Outer core constituents include at least PRRT1, PRRT2, CKAMP44/SHISA9, FRRS1L and NRN1. The proteins of the inner and outer core serve as a platform for other, more peripherally associated AMPAR constituents. Alone or in combination, these auxiliary subunits control the gating and pharmacology of the AMPAR complex and profoundly impact their biogenesis and protein processing. Interacts with intersectin 1/ITSN1. Interacts with SNARE complex components, including SNAP25, STX1A, SYT1 and SYT2; this interaction may inhibit SNARE complex formation.

The protein resides in the cell membrane. It is found in the presynaptic cell membrane. The protein localises to the synapse. It localises to the cell projection. Its subcellular location is the axon. The protein resides in the cytoplasmic vesicle. It is found in the secretory vesicle. The protein localises to the synaptic vesicle membrane. It localises to the postsynaptic density membrane. Its subcellular location is the dendritic spine. In terms of biological role, as a component of the outer core of AMPAR complex, may be involved in synaptic transmission in the central nervous system. In hippocampal neurons, in presynaptic terminals, plays an important role in the final steps of neurotransmitter release, possibly by regulating Ca(2+)-sensing. In the cerebellum, may inhibit SNARE complex formation and down-regulate short-term facilitation. The chain is Proline-rich transmembrane protein 2 (PRRT2) from Pongo abelii (Sumatran orangutan).